A 372-amino-acid polypeptide reads, in one-letter code: 4-hydroxy-3-methylbut-2-en-1-yl diphosphate synthase (flavodoxin) (372 aa).

[4Fe-4S] cluster-binding residues include C270, C273, C305, and E312.

This sequence belongs to the IspG family. [4Fe-4S] cluster serves as cofactor.

The catalysed reaction is (2E)-4-hydroxy-3-methylbut-2-enyl diphosphate + oxidized [flavodoxin] + H2O + 2 H(+) = 2-C-methyl-D-erythritol 2,4-cyclic diphosphate + reduced [flavodoxin]. The protein operates within isoprenoid biosynthesis; isopentenyl diphosphate biosynthesis via DXP pathway; isopentenyl diphosphate from 1-deoxy-D-xylulose 5-phosphate: step 5/6. In terms of biological role, converts 2C-methyl-D-erythritol 2,4-cyclodiphosphate (ME-2,4cPP) into 1-hydroxy-2-methyl-2-(E)-butenyl 4-diphosphate. In Vibrio parahaemolyticus serotype O3:K6 (strain RIMD 2210633), this protein is 4-hydroxy-3-methylbut-2-en-1-yl diphosphate synthase (flavodoxin).